The following is a 328-amino-acid chain: CMP-N-acetylneuraminate-beta-galactosamide-alpha-2,3-sialyltransferase 4 (328 aa).

Topologically, residues methionine 1–lysine 7 are cytoplasmic. The helical; Signal-anchor for type II membrane protein transmembrane segment at leucine 8–serine 25 threads the bilayer. The Lumenal portion of the chain corresponds to arginine 26 to phenylalanine 328. N-linked (GlcNAc...) asparagine glycosylation is found at asparagine 56, asparagine 126, asparagine 305, and asparagine 324. Cysteine 115 and cysteine 268 are oxidised to a cystine.

Belongs to the glycosyltransferase 29 family. The soluble form derives from the membrane form by proteolytic processing.

Its subcellular location is the golgi apparatus. The protein resides in the golgi stack membrane. The protein localises to the secreted. The enzyme catalyses a beta-D-galactosyl-(1-&gt;3)-N-acetyl-beta-D-galactosaminyl derivative + CMP-N-acetyl-beta-neuraminate = an N-acetyl-alpha-neuraminyl-(2-&gt;3)-beta-D-galactosyl-(1-&gt;3)-N-acetyl-beta-D-galactosaminyl derivative + CMP + H(+). It catalyses the reaction a beta-D-galactosyl-(1-&gt;3)-N-acetyl-alpha-D-galactosaminyl derivative + CMP-N-acetyl-beta-neuraminate = an N-acetyl-alpha-neuraminyl-(2-&gt;3)-beta-D-galactosyl-(1-&gt;3)-N-acetyl-alpha-D-galactosaminyl derivative + CMP + H(+). It carries out the reaction a beta-D-galactosyl-(1-&gt;4)-N-acetyl-beta-D-glucosaminyl derivative + CMP-N-acetyl-beta-neuraminate = an N-acetyl-alpha-neuraminyl-(2-&gt;3)-beta-D-galactosyl-(1-&gt;4)-N-acetyl-beta-D-glucosaminyl derivative + CMP + H(+). The catalysed reaction is a ganglioside GM1 (d18:1(4E)) + CMP-N-acetyl-beta-neuraminate = a ganglioside GD1a (d18:1(4E)) + CMP + H(+). The enzyme catalyses a ganglioside GA1 (d18:1(4E)) + CMP-N-acetyl-beta-neuraminate = a ganglioside GM1b (d18:1(4E)) + CMP + H(+). It catalyses the reaction a ganglioside GT1c (d18:1(4E)) + CMP-N-acetyl-beta-neuraminate = a ganglioside GQ1c (d18:1(4E)) + CMP + H(+). It carries out the reaction a neolactoside nLc4Cer + CMP-N-acetyl-beta-neuraminate = a neolactoside IV(3)-alpha-NeuAc-nLc4Cer + CMP + H(+). The catalysed reaction is a neolactoside nLc4Cer(d18:1(4E)) + CMP-N-acetyl-beta-neuraminate = a neolactoside IV(3)-alpha-NeuAc-nLc4Cer(d18:1(4E)) + CMP + H(+). The protein operates within protein modification; protein glycosylation. It functions in the pathway glycolipid biosynthesis. A beta-galactoside alpha2-3 sialyltransferase involved in terminal sialylation of glycoproteins and glycolipids. Catalyzes the transfer of sialic acid (N-acetyl-neuraminic acid; Neu5Ac) from the nucleotide sugar donor CMP-Neu5Ac onto acceptor Galbeta-(1-&gt;3)-GalNAc- and Galbeta-(1-&gt;4)-GlcNAc-terminated glycoconjugates through an alpha2-3 linkage. Plays a major role in hemostasis. Responsible for sialylation of plasma VWF/von Willebrand factor, preventing its recognition by asialoglycoprotein receptors (ASGPR) and subsequent clearance. Regulates ASGPR-mediated clearance of platelets. Participates in the biosynthesis of the sialyl Lewis X epitopes, both on O- and N-glycans, which are recognized by SELE/E-selectin, SELP/P-selectin and SELL/L-selectin. Essential for selectin-mediated rolling and adhesion of leukocytes during extravasation. Contributes to adhesion and transendothelial migration of neutrophils likely through terminal sialylation of CXCR2. In glycosphingolipid biosynthesis, sialylates GM1 and GA1 gangliosides to form GD1a and GM1b, respectively. Metabolizes brain c-series ganglioside GT1c forming GQ1c. Synthesizes ganglioside LM1 (IV3Neu5Ac-nLc4Cer), a major structural component of peripheral nerve myelin. The polypeptide is CMP-N-acetylneuraminate-beta-galactosamide-alpha-2,3-sialyltransferase 4 (ST3GAL4) (Pan troglodytes (Chimpanzee)).